Reading from the N-terminus, the 532-residue chain is Tyrosine-protein kinase Src-1 (532 aa).

The tract at residues 1 to 52 (MGATKSKPREGGPRSRSLDIVEGSHQPFTSLSASQTPNKSLDSHRPPAQPFG) is disordered. Gly-2 carries N-myristoyl glycine lipidation. The segment covering 7 to 19 (KPREGGPRSRSLD) has biased composition (basic and acidic residues). A compositionally biased stretch (polar residues) spans 26-40 (QPFTSLSASQTPNKS). The SH3 domain maps to 80–141 (GGVTTFVALY…PSNYVAPSDS (62 aa)). In terms of domain architecture, SH2 spans 147–244 (WYLGKITRRE…GLCHRLTTVC (98 aa)). Positions 266–519 (LRLELKLGQG…YLQAFLEDYF (254 aa)) constitute a Protein kinase domain. Residues 272-280 (LGQGCFGEV) and Lys-294 each bind ATP. The active-site Proton acceptor is Asp-385. Tyr-415 carries the post-translational modification Phosphotyrosine; by autocatalysis.

This sequence belongs to the protein kinase superfamily. Tyr protein kinase family. SRC subfamily.

Its subcellular location is the cell membrane. It catalyses the reaction L-tyrosyl-[protein] + ATP = O-phospho-L-tyrosyl-[protein] + ADP + H(+). The chain is Tyrosine-protein kinase Src-1 (src-a) from Xenopus laevis (African clawed frog).